Consider the following 206-residue polypeptide: Large ribosomal subunit protein uL4 (206 aa).

A disordered region spans residues Gly-46–Glu-95. Positions Ser-59–Gly-70 are enriched in basic residues.

It belongs to the universal ribosomal protein uL4 family. As to quaternary structure, part of the 50S ribosomal subunit.

In terms of biological role, one of the primary rRNA binding proteins, this protein initially binds near the 5'-end of the 23S rRNA. It is important during the early stages of 50S assembly. It makes multiple contacts with different domains of the 23S rRNA in the assembled 50S subunit and ribosome. Its function is as follows. Forms part of the polypeptide exit tunnel. This chain is Large ribosomal subunit protein uL4, found in Neisseria meningitidis serogroup C (strain 053442).